The sequence spans 190 residues: UPF0725 protein At2g20625 (190 aa).

Belongs to the UPF0725 (EMB2204) family.

The sequence is that of UPF0725 protein At2g20625 from Arabidopsis thaliana (Mouse-ear cress).